We begin with the raw amino-acid sequence, 278 residues long: Rhamnulose-1-phosphate aldolase (278 aa).

Residue Glu116 is part of the active site. Zn(2+) is bound by residues His139, His141, and His210.

The protein belongs to the aldolase class II family. RhaD subfamily. Requires Zn(2+) as cofactor.

It localises to the cytoplasm. It carries out the reaction L-rhamnulose 1-phosphate = (S)-lactaldehyde + dihydroxyacetone phosphate. It participates in carbohydrate degradation; L-rhamnose degradation; glycerone phosphate from L-rhamnose: step 3/3. Functionally, catalyzes the reversible cleavage of L-rhamnulose-1-phosphate to dihydroxyacetone phosphate (DHAP) and L-lactaldehyde. The chain is Rhamnulose-1-phosphate aldolase from Listeria welshimeri serovar 6b (strain ATCC 35897 / DSM 20650 / CCUG 15529 / CIP 8149 / NCTC 11857 / SLCC 5334 / V8).